A 307-amino-acid polypeptide reads, in one-letter code: Oxygen-dependent coproporphyrinogen-III oxidase (307 aa).

Ser99 contacts substrate. His103 and His113 together coordinate a divalent metal cation. The active-site Proton donor is His113. 115-117 (NVR) contacts substrate. The a divalent metal cation site is built by His152 and His182. The interval 247 to 282 (YVEFNLVFDRGTLFGLQSGGRTESILMSMPPVANWR) is important for dimerization. Residue 265-267 (GGR) participates in substrate binding.

It belongs to the aerobic coproporphyrinogen-III oxidase family. In terms of assembly, homodimer. A divalent metal cation serves as cofactor.

It localises to the cytoplasm. It carries out the reaction coproporphyrinogen III + O2 + 2 H(+) = protoporphyrinogen IX + 2 CO2 + 2 H2O. It participates in porphyrin-containing compound metabolism; protoporphyrin-IX biosynthesis; protoporphyrinogen-IX from coproporphyrinogen-III (O2 route): step 1/1. Its function is as follows. Involved in the heme biosynthesis. Catalyzes the aerobic oxidative decarboxylation of propionate groups of rings A and B of coproporphyrinogen-III to yield the vinyl groups in protoporphyrinogen-IX. The sequence is that of Oxygen-dependent coproporphyrinogen-III oxidase from Burkholderia multivorans (strain ATCC 17616 / 249).